The following is a 109-amino-acid chain: Encapsulin nanocompartment cargo protein EncD (109 aa).

E47 lines the Fe cation pocket. The interval 61–94 (AGGRGAAAPTPAREAPAEAPRLARGSADELHEAA) is disordered. The span at 66–85 (AAAPTPAREAPAEAPRLARG) shows a compositional bias: low complexity. The tract at residues 100–106 (LTVGSLR) is probable targeting peptide.

The protein localises to the encapsulin nanocompartment. Functionally, cargo protein of a type 1 encapsulin nanocompartment. May help nucleate Fe atoms in the interior of the encapsulin nanocompartment. Present in about 47 copies/encapsulin nanocompartment. This is Encapsulin nanocompartment cargo protein EncD from Myxococcus xanthus (strain DK1622).